Reading from the N-terminus, the 87-residue chain is Small ribosomal subunit protein bS20 (87 aa).

The protein belongs to the bacterial ribosomal protein bS20 family.

Functionally, binds directly to 16S ribosomal RNA. The sequence is that of Small ribosomal subunit protein bS20 from Clostridium perfringens (strain 13 / Type A).